A 563-amino-acid polypeptide reads, in one-letter code: GTPase Obg (563 aa).

Residues 2 to 168 (SDFVDRVTVH…RDVILELKSI (167 aa)) enclose the Obg domain. Residues 169-349 (ADVALVGFPS…LNWALADLVT (181 aa)) enclose the OBG-type G domain. Residues 175–182 (GFPSAGKS), 200–204 (FTTLV), 221–224 (DVPG), 301–304 (NKVD), and 330–332 (STA) contribute to the GTP site. 2 residues coordinate Mg(2+): Ser182 and Thr202. Residues 383 to 469 (DEGGNALDFT…DRAVEFDWDP (87 aa)) enclose the OCT domain. The tract at residues 525 to 563 (MMAERKAGHWADPSVDDDRHDETSLFGRGETADDEDVEQ) is disordered.

It belongs to the TRAFAC class OBG-HflX-like GTPase superfamily. OBG GTPase family. In terms of assembly, monomer. Mg(2+) is required as a cofactor.

The protein localises to the cytoplasm. In terms of biological role, an essential GTPase which binds GTP, GDP and possibly (p)ppGpp with moderate affinity, with high nucleotide exchange rates and a fairly low GTP hydrolysis rate. Plays a role in control of the cell cycle, stress response, ribosome biogenesis and in those bacteria that undergo differentiation, in morphogenesis control. This Bifidobacterium adolescentis (strain ATCC 15703 / DSM 20083 / NCTC 11814 / E194a) protein is GTPase Obg.